The primary structure comprises 120 residues: Testis-expressed protein 48 (120 aa).

Over residues 29–45 (KVPSQTQEHKPSTQNLL) the composition is skewed to polar residues. Positions 29–86 (KVPSQTQEHKPSTQNLLLQKDELDRQNPKRINAVSHLPSRTPLIQTKKSTSSSSSEFE) are disordered. Low complexity predominate over residues 74-83 (TKKSTSSSSS).

The sequence is that of Testis-expressed protein 48 from Homo sapiens (Human).